The following is a 240-amino-acid chain: Orotidine 5'-phosphate decarboxylase (240 aa).

Substrate-binding positions include Asp12, Lys34, 62-71 (DMKLFDIGNT), Thr117, Arg180, Gln189, Gly209, and Arg210. The active-site Proton donor is the Lys64.

The protein belongs to the OMP decarboxylase family. Type 1 subfamily. In terms of assembly, homodimer.

It carries out the reaction orotidine 5'-phosphate + H(+) = UMP + CO2. The protein operates within pyrimidine metabolism; UMP biosynthesis via de novo pathway; UMP from orotate: step 2/2. In terms of biological role, catalyzes the decarboxylation of orotidine 5'-monophosphate (OMP) to uridine 5'-monophosphate (UMP). This Ruegeria pomeroyi (strain ATCC 700808 / DSM 15171 / DSS-3) (Silicibacter pomeroyi) protein is Orotidine 5'-phosphate decarboxylase.